A 106-amino-acid chain; its full sequence is Urease subunit beta (106 aa).

The protein belongs to the urease beta subunit family. Heterotrimer of UreA (gamma), UreB (beta) and UreC (alpha) subunits. Three heterotrimers associate to form the active enzyme.

The protein resides in the cytoplasm. It carries out the reaction urea + 2 H2O + H(+) = hydrogencarbonate + 2 NH4(+). It functions in the pathway nitrogen metabolism; urea degradation; CO(2) and NH(3) from urea (urease route): step 1/1. The polypeptide is Urease subunit beta (Alkalilimnicola ehrlichii (strain ATCC BAA-1101 / DSM 17681 / MLHE-1)).